We begin with the raw amino-acid sequence, 134 residues long: ATP synthase epsilon chain (134 aa).

Belongs to the ATPase epsilon chain family. In terms of assembly, F-type ATPases have 2 components, CF(1) - the catalytic core - and CF(0) - the membrane proton channel. CF(1) has five subunits: alpha(3), beta(3), gamma(1), delta(1), epsilon(1). CF(0) has three main subunits: a, b and c.

The protein localises to the cell membrane. Produces ATP from ADP in the presence of a proton gradient across the membrane. The protein is ATP synthase epsilon chain of Ruminiclostridium cellulolyticum (strain ATCC 35319 / DSM 5812 / JCM 6584 / H10) (Clostridium cellulolyticum).